The chain runs to 653 residues: ATP-dependent zinc metalloprotease FtsH 1 (653 aa).

The Cytoplasmic segment spans residues M1 to R8. Residues N9 to K29 traverse the membrane as a helical segment. Residues D30–N110 are Extracellular-facing. The helical transmembrane segment at W111–M131 threads the bilayer. Topologically, residues M132–S653 are cytoplasmic. G203 to T210 provides a ligand contact to ATP. H425 serves as a coordination point for Zn(2+). E426 is an active-site residue. Zn(2+)-binding residues include H429 and D501. A disordered region spans residues E604–S653. The segment covering H624–P637 has biased composition (basic and acidic residues). Residues H638–S653 show a composition bias toward pro residues.

In the central section; belongs to the AAA ATPase family. The protein in the C-terminal section; belongs to the peptidase M41 family. As to quaternary structure, homohexamer. Zn(2+) is required as a cofactor.

The protein localises to the cell membrane. In terms of biological role, acts as a processive, ATP-dependent zinc metallopeptidase for both cytoplasmic and membrane proteins. Plays a role in the quality control of integral membrane proteins. This chain is ATP-dependent zinc metalloprotease FtsH 1, found in Sphaerobacter thermophilus (strain ATCC 49802 / DSM 20745 / KCCM 41009 / NCIMB 13125 / S 6022).